The chain runs to 372 residues: UDP-N-acetylglucosamine--N-acetylmuramyl-(pentapeptide) pyrophosphoryl-undecaprenol N-acetylglucosamine transferase (372 aa).

UDP-N-acetyl-alpha-D-glucosamine is bound by residues 15-17 (TGG), asparagine 126, arginine 169, serine 197, and glutamine 299.

This sequence belongs to the glycosyltransferase 28 family. MurG subfamily.

It is found in the cell inner membrane. It carries out the reaction di-trans,octa-cis-undecaprenyl diphospho-N-acetyl-alpha-D-muramoyl-L-alanyl-D-glutamyl-meso-2,6-diaminopimeloyl-D-alanyl-D-alanine + UDP-N-acetyl-alpha-D-glucosamine = di-trans,octa-cis-undecaprenyl diphospho-[N-acetyl-alpha-D-glucosaminyl-(1-&gt;4)]-N-acetyl-alpha-D-muramoyl-L-alanyl-D-glutamyl-meso-2,6-diaminopimeloyl-D-alanyl-D-alanine + UDP + H(+). It participates in cell wall biogenesis; peptidoglycan biosynthesis. Functionally, cell wall formation. Catalyzes the transfer of a GlcNAc subunit on undecaprenyl-pyrophosphoryl-MurNAc-pentapeptide (lipid intermediate I) to form undecaprenyl-pyrophosphoryl-MurNAc-(pentapeptide)GlcNAc (lipid intermediate II). This chain is UDP-N-acetylglucosamine--N-acetylmuramyl-(pentapeptide) pyrophosphoryl-undecaprenol N-acetylglucosamine transferase, found in Methylobacterium sp. (strain 4-46).